We begin with the raw amino-acid sequence, 212 residues long: NAD(P)H-hydrate epimerase (212 aa).

Positions 10–212 (MRSLERAAIA…IGVIVKPIGL (203 aa)) constitute a YjeF N-terminal domain. Residue 65–69 (NNGGD) coordinates (6S)-NADPHX. 2 residues coordinate K(+): asparagine 66 and aspartate 129. (6S)-NADPHX is bound by residues 133–139 (GLGLTRP) and aspartate 161. Residue serine 164 coordinates K(+).

Belongs to the NnrE/AIBP family. Requires K(+) as cofactor.

It catalyses the reaction (6R)-NADHX = (6S)-NADHX. The catalysed reaction is (6R)-NADPHX = (6S)-NADPHX. Its function is as follows. Catalyzes the epimerization of the S- and R-forms of NAD(P)HX, a damaged form of NAD(P)H that is a result of enzymatic or heat-dependent hydration. This is a prerequisite for the S-specific NAD(P)H-hydrate dehydratase to allow the repair of both epimers of NAD(P)HX. This Rhodobacter capsulatus (strain ATCC BAA-309 / NBRC 16581 / SB1003) protein is NAD(P)H-hydrate epimerase.